A 161-amino-acid chain; its full sequence is MVPKLFTSQICLLLLLGLMGVEGSLHAKPQQFTWAQWFEIQHINMTSQQCTNAMRVINNYQRRCKNQNTFLRTTFANVVNVCGNPNMTCPSNKTRKNCHQSGSQVPLIHCNLTTPSPQNISNCGYAQTPANMFYIVACDNRDQRRDPPQYPVVPVHLDRII.

The signal sequence occupies residues 1-27 (MVPKLFTSQICLLLLLGLMGVEGSLHA). A glycan (C-linked (Man) tryptophan) is linked at Trp-34. His-42 serves as the catalytic Proton acceptor. A glycan (N-linked (GlcNAc...) asparagine) is linked at Asn-44. 4 disulfide bridges follow: Cys-50/Cys-110, Cys-64/Cys-123, Cys-82/Cys-138, and Cys-89/Cys-98. A 3'-nitrotyrosine modification is found at Tyr-60. Position 65–69 (65–69 (KNQNT)) interacts with substrate. N-linked (GlcNAc...) asparagine glycans are attached at residues Asn-86, Asn-92, Asn-111, and Asn-119. His-156 functions as the Proton donor in the catalytic mechanism.

The protein belongs to the pancreatic ribonuclease family. Interacts with and forms a tight 1:1 complex with RNH1. Dimerization of two such complexes may occur.

The protein resides in the lysosome. It is found in the cytoplasmic granule. The enzyme catalyses an [RNA] containing cytidine + H2O = an [RNA]-3'-cytidine-3'-phosphate + a 5'-hydroxy-ribonucleotide-3'-[RNA].. It carries out the reaction an [RNA] containing uridine + H2O = an [RNA]-3'-uridine-3'-phosphate + a 5'-hydroxy-ribonucleotide-3'-[RNA].. Functionally, this is a non-secretory ribonuclease. It is a pyrimidine specific nuclease with a slight preference for U. Cytotoxin and helminthotoxin. Possesses a wide variety of biological activities. The polypeptide is Non-secretory ribonuclease (RNASE2) (Nomascus leucogenys (Northern white-cheeked gibbon)).